The following is a 358-amino-acid chain: Aminomethyltransferase (358 aa).

This sequence belongs to the GcvT family. The glycine cleavage system is composed of four proteins: P, T, L and H.

The enzyme catalyses N(6)-[(R)-S(8)-aminomethyldihydrolipoyl]-L-lysyl-[protein] + (6S)-5,6,7,8-tetrahydrofolate = N(6)-[(R)-dihydrolipoyl]-L-lysyl-[protein] + (6R)-5,10-methylene-5,6,7,8-tetrahydrofolate + NH4(+). Functionally, the glycine cleavage system catalyzes the degradation of glycine. This chain is Aminomethyltransferase, found in Francisella philomiragia subsp. philomiragia (strain ATCC 25017 / CCUG 19701 / FSC 153 / O#319-036).